The primary structure comprises 39 residues: Photosystem II reaction center protein L (39 aa).

Residues 18–38 (ILYWGLLLIFVLAVLFSNYFF) form a helical membrane-spanning segment.

Belongs to the PsbL family. In terms of assembly, PSII is composed of 1 copy each of membrane proteins PsbA, PsbB, PsbC, PsbD, PsbE, PsbF, PsbH, PsbI, PsbJ, PsbK, PsbL, PsbM, PsbT, PsbX, PsbY, PsbZ, Psb30/Ycf12, at least 3 peripheral proteins of the oxygen-evolving complex and a large number of cofactors. It forms dimeric complexes.

It is found in the plastid membrane. One of the components of the core complex of photosystem II (PSII). PSII is a light-driven water:plastoquinone oxidoreductase that uses light energy to abstract electrons from H(2)O, generating O(2) and a proton gradient subsequently used for ATP formation. It consists of a core antenna complex that captures photons, and an electron transfer chain that converts photonic excitation into a charge separation. This subunit is found at the monomer-monomer interface and is required for correct PSII assembly and/or dimerization. The sequence is that of Photosystem II reaction center protein L from Cuscuta pentagona (Five-angled dodder).